Here is a 343-residue protein sequence, read N- to C-terminus: Phospholipid phosphatase-related protein type 2 (343 aa).

A run of 3 helical transmembrane segments spans residues 12-32, 69-89, and 129-149; these read FSII…VILL, VPPA…ILLG, and FLGV…AGQV. Residue asparagine 165 is glycosylated (N-linked (GlcNAc...) asparagine). The next 3 membrane-spanning stretches (helical) occupy residues 210–230, 239–259, and 266–286; these read AALC…VFRV, SLCL…VAEY, and VLAG…CVVH. Positions 290-343 are disordered; the sequence is SRPPSGRRLSPWEDLGQAPTMDSPLEKNPRSAGRIRHRHGSPHPSRRTAPAVAT. A phosphoserine mark is found at serine 299 and serine 312. The segment covering 322 to 335 has biased composition (basic residues); sequence GRIRHRHGSPHPSR.

This sequence belongs to the PA-phosphatase related phosphoesterase family.

The protein resides in the membrane. The chain is Phospholipid phosphatase-related protein type 2 from Homo sapiens (Human).